The primary structure comprises 305 residues: Mas-related G-protein coupled receptor member A8 (305 aa).

Over 1–17 (MDKTILGSIDIETLIRH) the chain is Extracellular. Residues 18–38 (LMIIIFGLVGLTGNAIVFWLL) form a helical membrane-spanning segment. Over 39 to 46 (GFHLHRNA) the chain is Cytoplasmic. A helical transmembrane segment spans residues 47-67 (FLVYILNLALADFFYLLCHII). Over 68 to 85 (NSIMFLLKVPSPNIILDH) the chain is Extracellular. The chain crosses the membrane as a helical span at residues 86–106 (CFYTIMIVLYITGLSMLSAIS). The Cytoplasmic segment spans residues 107–129 (TERCLSVLCPIWYRCHRPEHTST). The chain crosses the membrane as a helical span at residues 130-150 (AMCAVIWVMSLLISILNGYFC). 2 N-linked (GlcNAc...) asparagine glycosylation sites follow: asparagine 151 and asparagine 159. The Extracellular segment spans residues 151 to 172 (NFSSPKYVNNSVCQASDIFIRT). The helical transmembrane segment at 173–193 (YPIFLFVLLCLSTLALLARLF) threads the bilayer. Over 194–207 (SGAGKRKFTRLFVT) the chain is Cytoplasmic. A helical membrane pass occupies residues 208 to 228 (IMLAILVFLLCGLPLGFFWFL). Over 229–243 (SPWIEDRFIVLDYRL) the chain is Extracellular. A helical transmembrane segment spans residues 244–264 (FFASVVLTVVNSCANPIIYFF). Residues 265–305 (VGSFRHRLKQQTLKMFLQRALQDTPETPENMVEMSRSKAEP) lie on the Cytoplasmic side of the membrane.

It belongs to the G-protein coupled receptor 1 family. Mas subfamily. Expressed in a subset of sensory neurons that includes nociceptors. Expressed in the subclass of non-peptidergic sensory neurons that are IB4(+) and VR1(-).

It is found in the cell membrane. Orphan receptor. May be a receptor for RFamide-family neuropeptides such as NPFF and NPAF, which are analgesic in vivo. May regulate nociceptor function and/or development, including the sensation or modulation of pain. This chain is Mas-related G-protein coupled receptor member A8 (Mrgpra8), found in Mus musculus (Mouse).